The primary structure comprises 154 residues: Putative ankyrin repeat protein RBE_1220 (154 aa).

ANK repeat units lie at residues 78–108 (EKVN…NVDQ) and 113–142 (NSRT…ILIL).

The sequence is that of Putative ankyrin repeat protein RBE_1220 from Rickettsia bellii (strain RML369-C).